The sequence spans 1221 residues: MMFRSDRMWSCHWKWKPSPLLFLFALYIMCVPHSVWGCANCRVVLSNPSGTFTSPCYPNDYPNSQACMWTLRAPTGYIIQITFNDFDIEEAPNCIYDSLSLDNGESQTKFCGATAKGLSFNSSANEMHVSFSSDFSIQKKGFNASYIRVAVSLRNQKVILPQTSDAYQVSVAKSISIPELSAFTLCFEATKVGHEDSDWTAFSYSNASFTQLLSFGKAKSGYFLSISDSKCLLNNALPVKEKEDIFAESFEQLCLVWNNSLGSIGVNFKRNYETVPCDSTISKVIPGNGKLLLGSNQNEIVSLKGDIYNFRLWNFTMNAKILSNLSCNVKGNVVDWQNDFWNIPNLALKAESNLSCGSYLIPLPAAELASCADLGTLCQATVNSPSTTPPTVTTNMPVTNRIDKQRNDGIIYRISVVIQNILRHPEVKVQSKVAEWLNSTFQNWNYTVYVVNISFHLSAGEDKIKVKRSLEDEPRLVLWALLVYNATNNTNLEGKIIQQKLLKNNESLDEGLRLHTVNVRQLGHCLAMEEPKGYYWPSIQPSEYVLPCPDKPGFSASRICFYNATNPLVTYWGPVDISNCLKEANEVANQILNLTADGQNLTSANITNIVEQVKRIVNKEENIDITLGSTLMNIFSNILSSSDSDLLESSSEALKTIDELAFKIDLNSTSHVNITTRNLALSVSSLLPGTNAISNFSIGLPSNNESYFQMDFESGQVDPLASVILPPNLLENLSPEDSVLVRRAQFTFFNKTGLFQDVGPQRKTLVSYVMACSIGNITIQNLKDPVQIKIKHTRTQEVHHPICAFWDLNKNKSFGGWNTSGCVAHRDSDASETVCLCNHFTHFGVLMDLPRSASQLDARNTKVLTFISYIGCGISAIFSAATLLTYVAFEKLRRDYPSKILMNLSTALLFLNLLFLLDGWITSFNVDGLCIAVAVLLHFFLLATFTWMGLEAIHMYIALVKVFNTYIRRYILKFCIIGWGLPALVVSVVLASRNNNEVYGKESYGKEKGDEFCWIQDPVIFYVTCAGYFGVMFFLNIAMFIVVMVQICGRNGKRSNRTLREEVLRNLRSVVSLTFLLGMTWGFAFFAWGPLNIPFMYLFSIFNSLQGLFIFIFHCAMKENVQKQWRQHLCCGRFRLADNSDWSKTATNIIKKSSDNLGKSLSSSSIGSNSTYLTSKSKSSSTTYFKRNSHTDNVSYEHSFNKSGSLRQCFHGQVLVKTGPC.

Positions 1-37 (MMFRSDRMWSCHWKWKPSPLLFLFALYIMCVPHSVWG) are cleaved as a signal peptide. Residues 38-862 (CANCRVVLSN…ASQLDARNTK (825 aa)) lie on the Extracellular side of the membrane. Cys41 and Cys67 are disulfide-bonded. The region spanning 41–149 (CRVVLSNPSG…KGFNASYIRV (109 aa)) is the CUB domain. Positions 89 and 97 each coordinate Ca(2+). Cys94 and Cys111 are disulfide-bonded. The N-linked (GlcNAc...) asparagine glycan is linked to Asn121. Residues Asp134, Ser136, and Ile137 each contribute to the Ca(2+) site. Residues Asn143, Asn206, Asn258, Asn314, Asn324, Asn353, Asn438, Asn445, Asn452, Asn485, Asn488, and Asn505 are each glycosylated (N-linked (GlcNAc...) asparagine). Residues 154-356 (RNQKVILPQT…ALKAESNLSC (203 aa)) form the Pentraxin (PTX) domain. Cystine bridges form between Cys186-Cys254 and Cys231-Cys277. The segment at 473 to 837 (EPRLVLWALL…SDASETVCLC (365 aa)) is mediates interaction with laminin-2. Intrachain disulfides connect Cys525-Cys560 and Cys548-Cys580. N-linked (GlcNAc...) asparagine glycans are attached at residues Asn563, Asn593, Asn600, Asn605, Asn667, Asn673, Asn695, Asn704, Asn750, Asn776, Asn811, and Asn818. Positions 670-853 (SHVNITTRNL…GVLMDLPRSA (184 aa)) constitute a GAIN-B domain. 2 disulfides stabilise this stretch: Cys803/Cys835 and Cys822/Cys837. The interval 803 to 853 (CAFWDLNKNKSFGGWNTSGCVAHRDSDASETVCLCNHFTHFGVLMDLPRSA) is GPS. A stachel region spans residues 842–850 (HFGVLMDLP). Residues 863-883 (VLTFISYIGCGISAIFSAATL) form a helical membrane-spanning segment. Residues 884-903 (LTYVAFEKLRRDYPSKILMN) are Cytoplasmic-facing. The helical transmembrane segment at 904–924 (LSTALLFLNLLFLLDGWITSF) threads the bilayer. Residues 925-929 (NVDGL) are Extracellular-facing. Residues 930–950 (CIAVAVLLHFFLLATFTWMGL) traverse the membrane as a helical segment. Residues 951–970 (EAIHMYIALVKVFNTYIRRY) are Cytoplasmic-facing. A helical membrane pass occupies residues 971–991 (ILKFCIIGWGLPALVVSVVLA). Over 992–1024 (SRNNNEVYGKESYGKEKGDEFCWIQDPVIFYVT) the chain is Extracellular. The helical transmembrane segment at 1025-1045 (CAGYFGVMFFLNIAMFIVVMV) threads the bilayer. The Cytoplasmic segment spans residues 1046–1069 (QICGRNGKRSNRTLREEVLRNLRS). The helical transmembrane segment at 1070–1090 (VVSLTFLLGMTWGFAFFAWGP) threads the bilayer. Topologically, residues 1091–1092 (LN) are extracellular. Residues 1093–1113 (IPFMYLFSIFNSLQGLFIFIF) traverse the membrane as a helical segment. Asn1103 is a 17alpha-hydroxyprogesterone binding site. Residues 1114-1221 (HCAMKENVQK…GQVLVKTGPC (108 aa)) lie on the Cytoplasmic side of the membrane. Residues 1156–1176 (NLGKSLSSSSIGSNSTYLTSK) are disordered. Ser1165 and Ser1168 each carry phosphoserine.

The protein belongs to the G-protein coupled receptor 2 family. Adhesion G-protein coupled receptor (ADGR) subfamily. As to quaternary structure, heterodimer of 2 chains generated by proteolytic processing; the large extracellular N-terminal fragment and the membrane-bound C-terminal fragment predominantly remain associated and non-covalently linked. Interacts with Laminin-2; this interaction stabilizes the receptor in an inactive state. Laminin-2 polymerization could facilitate ADGRG6-NTF removal, thereby exposing the tethered agonist to drive myelination. Interacts with PRNP. Interacts with ITGB1. Interacts with LRP1. Proteolytically cleaved into 2 conserved sites: one in the GPS region of the GAIN-B domain (S1 site) and the other in the middle of the extracellular domain (S2 site). The proteolytic cleavage at S1 site generates an extracellular subunit and a seven-transmembrane subunit. Furin is involved in the cleavage of the S2 site generating a soluble fragment. Processing at the GPS region occurred independent of and probably prior to the cleavage at the S2 site. Proteolytic cleavage is required for activation of the receptor. In terms of processing, highly glycosylated. In terms of tissue distribution, expressed in placenta and to a lower extent in pancreas and liver. Detected in aortic endothelial cells but not in skin microvascular endothelial cells.

The protein localises to the cell membrane. With respect to regulation, forms a heterodimer of 2 chains generated by proteolytic processing that remain associated through non-covalent interactions mediated by the GAIN-B domain. In the inactivated receptor, the Stachel sequence (also named stalk) is embedded in the GAIN-B domain, where it adopts a beta-strand conformation. On activation, the Stachel moves into the 7 transmembrane region and adopts a twisted hook-shaped configuration that forms contacts within the receptor, leading to coupling of a G-alpha protein, which activates signaling. The cleaved GAIN-B and N-terminal domains can then dissociate from the rest of the receptor. Its function is as follows. Adhesion G-protein coupled receptor (aGPCR) for steroid hormones, such as progesterone and 17alpha-hydroxyprogesterone (17OHP). Involved in many biological processes, such as myelination, sprouting angiogenesis, placenta, ear and cartilage development. Ligand binding causes a conformation change that triggers signaling via guanine nucleotide-binding proteins (G proteins) and modulates the activity of downstream effectors, such as adenylate cyclase. ADGRG6 is coupled to G(i) G alpha proteins and mediates inhibition of adenylate cyclase. Also able to couple to G(q) G proteins. Involved in myelination of the peripheral nervous system: required for differentiation of promyelinating Schwann cells and for normal myelination of axons. Also acts as a regulator of body length and bone mass. Acts as a regulator of blood-brain barrier formation in the central nervous system vie its association with LRP1 and ITGB1. The sequence is that of Adhesion G-protein coupled receptor G6 from Homo sapiens (Human).